The primary structure comprises 199 residues: Probable DNA-directed RNA polymerase subunit delta (199 aa).

The HTH HARE-type domain maps to leucine 14–tryptophan 81. Composition is skewed to acidic residues over residues glycine 116–aspartate 147, alanine 157–leucine 171, and leucine 182–lysine 199. The tract at residues glycine 116–lysine 199 is disordered.

It belongs to the RpoE family. In terms of assembly, RNAP is composed of a core of 2 alpha, a beta and a beta' subunits. The core is associated with a delta subunit and one of several sigma factors.

Functionally, participates in both the initiation and recycling phases of transcription. In the presence of the delta subunit, RNAP displays an increased specificity of transcription, a decreased affinity for nucleic acids, and an increased efficiency of RNA synthesis because of enhanced recycling. The protein is Probable DNA-directed RNA polymerase subunit delta of Lactiplantibacillus plantarum (strain ATCC BAA-793 / NCIMB 8826 / WCFS1) (Lactobacillus plantarum).